The primary structure comprises 171 residues: uncharacterized protein (171 aa).

Disordered regions lie at residues 27 to 53 (DCPG…KMVL) and 82 to 108 (GHLE…PSSS). Residues 32 to 50 (GNNNREPSISTRGRTSSSK) show a composition bias toward polar residues.

This is an uncharacterized protein from Homo sapiens (Human).